The following is a 115-amino-acid chain: Large ribosomal subunit protein eL30 (115 aa).

Phosphoserine occurs at positions 10 and 16. Residue K26 is modified to N6-acetyllysine; alternate. Residue K26 forms a Glycyl lysine isopeptide (Lys-Gly) (interchain with G-Cter in SUMO2); alternate linkage.

Belongs to the eukaryotic ribosomal protein eL30 family. As to quaternary structure, component of the large ribosomal subunit.

The protein localises to the cytoplasm. Functionally, component of the large ribosomal subunit. The ribosome is a large ribonucleoprotein complex responsible for the synthesis of proteins in the cell. The protein is Large ribosomal subunit protein eL30 (RPL30) of Homo sapiens (Human).